Here is a 515-residue protein sequence, read N- to C-terminus: Maturase K (515 aa).

The protein belongs to the intron maturase 2 family. MatK subfamily.

The protein resides in the plastid. It is found in the chloroplast. Functionally, usually encoded in the trnK tRNA gene intron. Probably assists in splicing its own and other chloroplast group II introns. This is Maturase K from Pinus clausa (Sand pine).